The primary structure comprises 415 residues: F-box protein ETP1 (415 aa).

Residues 1–46 enclose the F-box domain; sequence MTIPDLCNDLVDEILCRVPARNLKRLRSTSKRWNRLFKDDRRFARE.

Interacts with EIN2 (via C-terminus).

Functionally, negative regulator of EIN2 protein stability. In Arabidopsis thaliana (Mouse-ear cress), this protein is F-box protein ETP1.